A 271-amino-acid chain; its full sequence is Mannosyl-3-phosphoglycerate phosphatase (271 aa).

Aspartate 13 serves as the catalytic Nucleophile. The Mg(2+) site is built by aspartate 13, aspartate 15, and aspartate 214.

This sequence belongs to the HAD-like hydrolase superfamily. MPGP family. The cofactor is Mg(2+).

The protein resides in the cytoplasm. The catalysed reaction is 2-O-(alpha-D-mannosyl)-3-phosphoglycerate + H2O = (2R)-2-O-(alpha-D-mannosyl)-glycerate + phosphate. The protein is Mannosyl-3-phosphoglycerate phosphatase of Escherichia coli O7:K1 (strain IAI39 / ExPEC).